A 620-amino-acid polypeptide reads, in one-letter code: Aspartic protease 1 (620 aa).

Residues 1 to 110 (MSPSSRFRNL…LGKAVGLSTS (110 aa)) are Cytoplasmic-facing. A propeptide spanning residues 1–258 (MSPSSRFRNL…SKKDDGNLSG (258 aa)) is cleaved from the precursor. Positions 27–31 (YASLL) are important for proper cellular trafficking. The helical; Signal-anchor for type II membrane protein transmembrane segment at 111 to 131 (VICVVALFGIVCLCLYGLVNF) threads the bilayer. Residues 132 to 620 (SFTSVETSPL…KQIGFARLKN (489 aa)) lie on the Lumenal side of the membrane. A disordered region spans residues 138–174 (TSPLDDPRNSPVMGELGNPQASTPSSARADTPARHDR). A compositionally biased stretch (polar residues) spans 156 to 165 (PQASTPSSAR). A Peptidase A1 domain is found at 275 to 616 (YYTEIYVGSP…DYDNKQIGFA (342 aa)). Residues D293 and D476 contribute to the active site. C513 and C550 form a disulfide bridge.

Belongs to the peptidase A1 family. Proteolytically cleaved into the soluble active mature form by, at least, cysteine protease CPL. Undergoes at least four processing steps; the first cleavage removes the propeptide resulting in the production of a soluble 45 kDa protein, which is further processed into a 35 kDa form followed by an additional processing into the final active 30 kDa form.

The protein localises to the membrane. It is found in the vacuole. Aspartyl protease which is dispensable for protein degradation in the vacuolar compartment (VAC) or for tachyzoite and bradyzoite viability. The polypeptide is Aspartic protease 1 (Toxoplasma gondii).